Consider the following 87-residue polypeptide: uncharacterized protein (87 aa).

The interval 52–87 (KWQPRPDANNSDTTTSTEDSTTDTETEYSTTEDELA) is disordered. The span at 71–87 (STTDTETEYSTTEDELA) shows a compositional bias: acidic residues.

This is an uncharacterized protein from Autographa californica nuclear polyhedrosis virus (AcMNPV).